Consider the following 513-residue polypeptide: Na(+)/H(+) antiporter NhaB (513 aa).

9 helical membrane-spanning segments follow: residues 21–41 (ICIIAFLVINPLIYFFISPFV), 88–108 (IMANFEVILLLMFMVAGIYFM), 119–139 (LLIVIHSKKILSLAFCLSATF), 243–263 (LPVSLPVLICGVITCLLLEHF), 299–318 (MGIQALAGIWLVVGLALHLA), 322–344 (IIGLTIIIICTAFCGITDEHAIG), 350–370 (PMPFTALIVVFFTVVAVIVDL), 389–409 (LALFYVFNGLLSMISDNVFVG), and 477–497 (MALPYTIVLSIIGFLSLEFLL).

This sequence belongs to the NhaB Na(+)/H(+) (TC 2.A.34) antiporter family.

It is found in the cell inner membrane. It carries out the reaction 2 Na(+)(in) + 3 H(+)(out) = 2 Na(+)(out) + 3 H(+)(in). Its function is as follows. Na(+)/H(+) antiporter that extrudes sodium in exchange for external protons. The polypeptide is Na(+)/H(+) antiporter NhaB (Actinobacillus pleuropneumoniae serotype 5b (strain L20)).